A 194-amino-acid chain; its full sequence is Probable GTP-binding protein EngB (194 aa).

Residues 22 to 194 (DLPEYALAGR…AWQFIKEGME (173 aa)) enclose the EngB-type G domain. Residues 30–37 (GRSNVGKS), 57–61 (GKTQT), 75–78 (DVPG), 142–145 (TKAD), and 174–176 (FSS) each bind GTP. Mg(2+) contacts are provided by Ser-37 and Thr-59.

This sequence belongs to the TRAFAC class TrmE-Era-EngA-EngB-Septin-like GTPase superfamily. EngB GTPase family. Mg(2+) is required as a cofactor.

Necessary for normal cell division and for the maintenance of normal septation. This Listeria welshimeri serovar 6b (strain ATCC 35897 / DSM 20650 / CCUG 15529 / CIP 8149 / NCTC 11857 / SLCC 5334 / V8) protein is Probable GTP-binding protein EngB.